A 259-amino-acid polypeptide reads, in one-letter code: Protein N-terminal and lysine N-methyltransferase efm7 (259 aa).

Residues Trp-56, 83 to 85, Asp-105, Trp-139, and Ala-163 each bind S-adenosyl-L-methionine; that span reads GAA.

This sequence belongs to the class I-like SAM-binding methyltransferase superfamily. EFM7 family.

The protein resides in the cytoplasm. Its function is as follows. S-adenosyl-L-methionine-dependent protein methyltransferase that trimethylates the N-terminal glycine 'Gly-2' of elongation factor 1-alpha, before also catalyzing the mono- and dimethylation of 'Lys-3'. The sequence is that of Protein N-terminal and lysine N-methyltransferase efm7 from Aspergillus fumigatus (strain ATCC MYA-4609 / CBS 101355 / FGSC A1100 / Af293) (Neosartorya fumigata).